The chain runs to 238 residues: 4-hydroxy-tetrahydrodipicolinate reductase (238 aa).

Residue 12-17 (GASGRM) coordinates NAD(+). Arg40 provides a ligand contact to NADP(+). Residues 93–95 (GTT) and 117–120 (ASNF) each bind NAD(+). His149 functions as the Proton donor/acceptor in the catalytic mechanism. Residue His150 participates in (S)-2,3,4,5-tetrahydrodipicolinate binding. Lys153 (proton donor) is an active-site residue. 159-160 (GT) contributes to the (S)-2,3,4,5-tetrahydrodipicolinate binding site.

Belongs to the DapB family.

It localises to the cytoplasm. The enzyme catalyses (S)-2,3,4,5-tetrahydrodipicolinate + NAD(+) + H2O = (2S,4S)-4-hydroxy-2,3,4,5-tetrahydrodipicolinate + NADH + H(+). The catalysed reaction is (S)-2,3,4,5-tetrahydrodipicolinate + NADP(+) + H2O = (2S,4S)-4-hydroxy-2,3,4,5-tetrahydrodipicolinate + NADPH + H(+). It functions in the pathway amino-acid biosynthesis; L-lysine biosynthesis via DAP pathway; (S)-tetrahydrodipicolinate from L-aspartate: step 4/4. Catalyzes the conversion of 4-hydroxy-tetrahydrodipicolinate (HTPA) to tetrahydrodipicolinate. This chain is 4-hydroxy-tetrahydrodipicolinate reductase, found in Xanthomonas campestris pv. campestris (strain 8004).